The primary structure comprises 413 residues: Palmitoyltransferase ZDHHC6 (413 aa).

Residues 1–24 (MGIFCSVIKFENLQDLRRLCHWGP) are Cytoplasmic-facing. The chain crosses the membrane as a helical span at residues 25-45 (IIALGVIAICSTMAMIDSVLW). Topologically, residues 46–57 (YWPLHTTGGSVN) are lumenal. The helical transmembrane segment at 58 to 78 (FIMLINWTVMILYNYFNAMFA) threads the bilayer. Residues 79-143 (GPGFVPRGWK…NCCGHQNHAS (65 aa)) lie on the Cytoplasmic side of the membrane. A DHHC domain is found at 99 to 149 (QYCKVCQAYKAPRSHHCRKCNRCVMKMDHHCPWINNCCGHQNHASFTLFLL). Residue C129 is the S-palmitoyl cysteine intermediate of the active site. Residues 144–164 (FTLFLLLAPLGCTHAAFIFVM) traverse the membrane as a helical segment. Residues 165–194 (TMYTQLYNRLSFGWNTVKIDMSAARRDPPP) lie on the Lumenal side of the membrane. Residues 195-215 (IVPFGLAAFAATLFALGLALG) traverse the membrane as a helical segment. Residues 216–413 (TTIAVGMLFF…PAPEGEKKNR (198 aa)) are Cytoplasmic-facing. The 86-residue stretch at 313–398 (VRSVRYKVIE…PRNCVEKCPC (86 aa)) folds into the SH3 domain. 3 S-palmitoyl cysteine lipidation sites follow: C328, C329, and C343. Positions 410-413 (KKNR) match the Di-lysine motif motif.

It belongs to the DHHC palmitoyltransferase family. In terms of assembly, homooligomerizes. Interacts with SELENOK. Post-translationally, palmitoylated at 3 different sites by ZDHHC16. The combination of the different palmitoylation events strongly affects the quaternary assembly of ZDHHC6, its localization, stability and function. Palmitoylation at Cys-328 accelerates the turnover of ZDHHC6. Depalmitoylated by LYPLA2.

The protein resides in the endoplasmic reticulum membrane. The catalysed reaction is L-cysteinyl-[protein] + hexadecanoyl-CoA = S-hexadecanoyl-L-cysteinyl-[protein] + CoA. It catalyses the reaction L-cysteinyl-[protein] + octadecanoyl-CoA = S-octadecanoyl-L-cysteinyl-[protein] + CoA. Endoplasmic reticulum palmitoyl acyltransferase that mediates palmitoylation of proteins such as AMFR, CALX, ITPR1 and TFRC. Palmitoylates calnexin (CALX), which is required for its association with the ribosome-translocon complex and efficient folding of glycosylated proteins. Mediates palmitoylation of AMFR, promoting AMFR distribution to the peripheral endoplasmic reticulum. Together with SELENOK, palmitoylates ITPR1 in immune cells, leading to regulate ITPR1 stability and function. Stearoyltransferase that mediates stearoylation of TFRC to inhibit TFRC-mediated activation of the JNK pathway and mitochondrial fragmentation. This is Palmitoyltransferase ZDHHC6 from Mus musculus (Mouse).